We begin with the raw amino-acid sequence, 452 residues long: 23S rRNA (uracil(1939)-C(5))-methyltransferase RlmD (452 aa).

The segment at 1-25 (MSKKKSNSGLRFQPAGGNRTPQVPV) is disordered. One can recognise a TRAM domain in the interval 22–80 (QVPVGKKQRLDIERLAGDGRGIAFLDGRTWFVSGALAGEAVEARVLNARGKVVEARLER). [4Fe-4S] cluster is bound by residues Cys93, Cys99, Cys102, and Cys181. Residues Gln285, Phe314, Asn319, Glu335, Asp362, and Asp383 each coordinate S-adenosyl-L-methionine. Cys409 functions as the Nucleophile in the catalytic mechanism.

This sequence belongs to the class I-like SAM-binding methyltransferase superfamily. RNA M5U methyltransferase family. RlmD subfamily.

It catalyses the reaction uridine(1939) in 23S rRNA + S-adenosyl-L-methionine = 5-methyluridine(1939) in 23S rRNA + S-adenosyl-L-homocysteine + H(+). Its function is as follows. Catalyzes the formation of 5-methyl-uridine at position 1939 (m5U1939) in 23S rRNA. The polypeptide is 23S rRNA (uracil(1939)-C(5))-methyltransferase RlmD (Pseudomonas putida (strain ATCC 47054 / DSM 6125 / CFBP 8728 / NCIMB 11950 / KT2440)).